Reading from the N-terminus, the 487-residue chain is Complement C1r subcomponent-like protein (487 aa).

Positions 1 to 35 (MPGPRVWGKYLWRSPHSKGCPGAMWWLLLWGVLQA) are cleaved as a signal peptide. The region spanning 39–163 (RGSVLLAQEL…KGFLALYQTV (125 aa)) is the CUB domain. A disulfide bond links cysteine 94 and cysteine 112. N-linked (GlcNAc...) asparagine glycosylation is found at asparagine 147 and asparagine 166. The 66-residue stretch at 165 to 230 (VNYSQPISEA…DGEEVLQCMP (66 aa)) folds into the Sushi domain. Cysteine 195 and cysteine 228 are disulfide-bonded. Asparagine 242 carries N-linked (GlcNAc...) (complex) asparagine glycosylation. Residues 245–484 (TLGSSRAKLG…YVDWIKGVMN (240 aa)) enclose the Peptidase S1 domain. The active-site Charge relay system is the histidine 283. An N-linked (GlcNAc...) asparagine glycan is attached at asparagine 296. Aspartate 339 acts as the Charge relay system in catalysis. An N-linked (GlcNAc...) asparagine glycan is attached at asparagine 363. 2 disulfides stabilise this stretch: cysteine 402-cysteine 421 and cysteine 432-cysteine 462. Residue serine 436 is the Charge relay system of the active site.

Belongs to the peptidase S1 family. Highly expressed in placenta, liver, kidney, pancreas, moderately in lung, spleen, prostate, ovary, colon, and PBL, and weakly in heart, skeletal muscle, thymus, testis, and small intestine. Expressed in PC-3 (prostate adenocarcinoma) and SK-OV-3 (ovary adenocarcinoma) cells, but not in LoVo and HT-29 (colon adenocarcinoma), SMMC7721 (hepatocellular carcinoma), CaoV-3 (ovary adenocarcinoma), HeLa (cervix epithelioid carcinoma), MCF-7 (breast adenocarcinoma), U-251MG (glioma) or A-549 (lung carcinoma) cells. Widely expressed in myeloid leukemia cell lines, including K-562 (chronic myelogenous leukemia), THP-1 (myelomonocytic leukemia), HL-60 and NB4 (promyelocytic leukemia), and KG-1 (acute myelogenous leukemia) cells. Expressed mainly in the liver and in serum (at protein level).

Its subcellular location is the secreted. In terms of biological role, mediates the proteolytic cleavage of HP/haptoglobin in the endoplasmic reticulum. The sequence is that of Complement C1r subcomponent-like protein (C1RL) from Homo sapiens (Human).